The primary structure comprises 327 residues: Glycoprotein integral membrane protein 1 (327 aa).

A signal peptide spans 1–23 (MEGGLSAPLSVRLLLFIALPAAG). The Extracellular portion of the chain corresponds to 24–259 (WLTTNAPRPP…LCRFWSSVVP (236 aa)). Residues Asn-44, Asn-62, and Asn-146 are each glycosylated (N-linked (GlcNAc...) asparagine). The helical transmembrane segment at 260-280 (VLFMFLDVMVVGVLGAAGVIA) threads the bilayer. Topologically, residues 281-327 (VLKLLFPVCENKGILQVDKMNGISVPIILYPDGSEKTAQKLTDKTDI) are cytoplasmic.

The protein localises to the membrane. The polypeptide is Glycoprotein integral membrane protein 1 (Ginm1) (Mus musculus (Mouse)).